A 345-amino-acid polypeptide reads, in one-letter code: Sulfate/thiosulfate import ATP-binding protein CysA (345 aa).

An ABC transporter domain is found at 3 to 237; it reads IQVSGLCKHF…PRTEFVYQFV (235 aa). An ATP-binding site is contributed by 35-42; that stretch reads GPSGCGKT.

Belongs to the ABC transporter superfamily. Sulfate/tungstate importer (TC 3.A.1.6) family. As to quaternary structure, the complex is composed of two ATP-binding proteins (CysA), two transmembrane proteins (CysT and CysW) and a solute-binding protein (CysP).

The protein resides in the cell inner membrane. The enzyme catalyses sulfate(out) + ATP + H2O = sulfate(in) + ADP + phosphate + H(+). It catalyses the reaction thiosulfate(out) + ATP + H2O = thiosulfate(in) + ADP + phosphate + H(+). In terms of biological role, part of the ABC transporter complex CysAWTP involved in sulfate/thiosulfate import. Responsible for energy coupling to the transport system. The polypeptide is Sulfate/thiosulfate import ATP-binding protein CysA (Vibrio vulnificus (strain CMCP6)).